We begin with the raw amino-acid sequence, 600 residues long: Long-chain-fatty-acid--CoA ligase FadD15 (600 aa).

It belongs to the ATP-dependent AMP-binding enzyme family.

It catalyses the reaction a long-chain fatty acid + ATP + CoA = a long-chain fatty acyl-CoA + AMP + diphosphate. The protein operates within lipid metabolism; fatty acid biosynthesis. Catalyzes the activation of long-chain fatty acids as acyl-coenzyme A (acyl-CoA), which are then transferred to the multifunctional polyketide synthase (PKS) type III for further chain extension. This Mycobacterium bovis (strain ATCC BAA-935 / AF2122/97) protein is Long-chain-fatty-acid--CoA ligase FadD15 (fadD15).